Reading from the N-terminus, the 422-residue chain is 5-hydroxytryptamine receptor 1A (422 aa).

Residues 1 to 38 (MDVLGPGQGNNTTSSEGPFGTRANATGISDVTFSYQVI) are Extracellular-facing. Asparagine 10, asparagine 11, and asparagine 24 each carry an N-linked (GlcNAc...) asparagine glycan. Residues 39–59 (TSLLLGTLIFCAVLGNACVVA) form a helical membrane-spanning segment. The Cytoplasmic segment spans residues 60-73 (AIALERSLQNVANY). A helical transmembrane segment spans residues 74–98 (LIGSLAVTDLMVSVLVLPMAALYQV). Residues 99–107 (LNKWTLGQV) are Extracellular-facing. A helical membrane pass occupies residues 108–132 (TCDLFIALDVLCCTSSILHLCAIAL). Cysteine 109 and cysteine 187 are oxidised to a cystine. Positions 116 and 120 each coordinate serotonin. The short motif at 133–135 (DRY) is the DRY motif; important for ligand-induced conformation changes element. The Cytoplasmic segment spans residues 133-152 (DRYWAITDPIDYVNKRTPRR). A helical membrane pass occupies residues 153 to 174 (AAALISLTWLVGFLISIPPMLG). Over 175–193 (WRTPEDRSDPDACTISKDH) the chain is Extracellular. The chain crosses the membrane as a helical span at residues 194–216 (GYTIYSTFGAFYIPLLLMLVLYG). Residues 217 to 346 (RIFRAARFRI…LARERKTVKT (130 aa)) are Cytoplasmic-facing. The interval 237–262 (GADSRLGASPAPQRKKSANGELGSRE) is disordered. 3 residues coordinate 1D-myo-inositol 4-phosphate: lysine 345, threonine 346, and glycine 352. Residues 347 to 370 (LGIIMGTFILCWLPFFIVALVLPF) form a helical membrane-spanning segment. The Extracellular portion of the chain corresponds to 371 to 378 (CESSCHMP). Residues 379 to 403 (TLLGAIINWLGYSNSLLNPVIYAYF) form a helical membrane-spanning segment. Positions 396–400 (NPVIY) match the NPxxY motif; important for ligand-induced conformation changes and signaling motif. Positions 403, 404, and 405 each coordinate 1D-myo-inositol 4-phosphate. The Cytoplasmic segment spans residues 404–422 (NKDFQNAFKKILKCKFCRR).

This sequence belongs to the G-protein coupled receptor 1 family. 5-hydroxytryptamine receptor subfamily. HTR1A sub-subfamily. Heterodimer; heterodimerizes with GPER1. Interacts with YIF1B. Interacts with GPR39 and GALR1.

The protein resides in the cell membrane. Its subcellular location is the cell projection. It localises to the dendrite. Its activity is regulated as follows. G-protein coupled receptor activity is regulated by lipids: phosphatidylinositol 4-phosphate increases HTR1A-mediated activity. Functionally, G-protein coupled receptor for 5-hydroxytryptamine (serotonin). Also functions as a receptor for various drugs and psychoactive substances. Ligand binding causes a conformation change that triggers signaling via guanine nucleotide-binding proteins (G proteins) and modulates the activity of downstream effectors, such as adenylate cyclase. HTR1A is coupled to G(i)/G(o) G alpha proteins and mediates inhibitory neurotransmission: signaling inhibits adenylate cyclase activity and activates a phosphatidylinositol-calcium second messenger system that regulates the release of Ca(2+) ions from intracellular stores. Beta-arrestin family members regulate signaling by mediating both receptor desensitization and resensitization processes. The polypeptide is 5-hydroxytryptamine receptor 1A (HTR1A) (Equus caballus (Horse)).